Consider the following 116-residue polypeptide: Fluoride-specific ion channel FluC 1 (116 aa).

4 helical membrane passes run 2-22 (LVLV…RYGI), 33-53 (PLPI…GWIL), 63-83 (IFLG…INEL), and 96-116 (WEYF…GTLI). Na(+)-binding residues include Gly-71 and Thr-74.

Belongs to the fluoride channel Fluc/FEX (TC 1.A.43) family.

It is found in the cell membrane. It catalyses the reaction fluoride(in) = fluoride(out). With respect to regulation, na(+) is not transported, but it plays an essential structural role and its presence is essential for fluoride channel function. Fluoride-specific ion channel. Important for reducing fluoride concentration in the cell, thus reducing its toxicity. The protein is Fluoride-specific ion channel FluC 1 of Lactiplantibacillus plantarum (strain ATCC BAA-793 / NCIMB 8826 / WCFS1) (Lactobacillus plantarum).